A 227-amino-acid chain; its full sequence is Transmembrane emp24 domain-containing protein 4 (227 aa).

The signal sequence occupies residues 1-29; sequence MAGVGAGPLRAMGRQALLLLALCATGAQG. At 30–194 the chain is on the lumenal side; the sequence is LYFHIGETEK…RLTSESTNQR (165 aa). In terms of domain architecture, GOLD spans 39-137; that stretch reads KRCFIEEIPD…KLRVHLDIQV (99 aa). Asparagine 117 is a glycosylation site (N-linked (GlcNAc...) asparagine). Residues 147 to 176 are a coiled coil; sequence IAAKDKLTELQLRARQLLDQVEQIQKEQDY. Residues 195–212 traverse the membrane as a helical segment; sequence VLWWSIAQTVILILTGIW. Residues 213-227 are Cytoplasmic-facing; it reads QMRHLKSFFEAKKLV. Residues 220–221 carry the COPII vesicle coat-binding motif; sequence FF. The short motif at 220–227 is the COPI vesicle coat-binding element; sequence FFEAKKLV.

It belongs to the EMP24/GP25L family.

The protein localises to the endoplasmic reticulum membrane. Functionally, involved in vesicular protein trafficking, mainly in the early secretory pathway. targeting. Involved in the maintenance of the Golgi apparatus. Appears to play a role in the biosynthesis of secreted cargo including processing. Involved in endoplasmic reticulum stress response. May play a role in the regulation of heat-shock response and apoptosis. The sequence is that of Transmembrane emp24 domain-containing protein 4 (TMED4) from Homo sapiens (Human).